The chain runs to 957 residues: Glycine dehydrogenase (decarboxylating) (957 aa).

Position 708 is an N6-(pyridoxal phosphate)lysine (lysine 708).

It belongs to the GcvP family. The glycine cleavage system is composed of four proteins: P, T, L and H. Requires pyridoxal 5'-phosphate as cofactor.

The catalysed reaction is N(6)-[(R)-lipoyl]-L-lysyl-[glycine-cleavage complex H protein] + glycine + H(+) = N(6)-[(R)-S(8)-aminomethyldihydrolipoyl]-L-lysyl-[glycine-cleavage complex H protein] + CO2. The glycine cleavage system catalyzes the degradation of glycine. The P protein binds the alpha-amino group of glycine through its pyridoxal phosphate cofactor; CO(2) is released and the remaining methylamine moiety is then transferred to the lipoamide cofactor of the H protein. This is Glycine dehydrogenase (decarboxylating) from Escherichia coli O157:H7.